The sequence spans 416 residues: Serine--tRNA ligase (416 aa).

L-serine is bound at residue 232–234; the sequence is TAE. 263-265 is a binding site for ATP; the sequence is RKE. Position 286 (Glu-286) interacts with L-serine. 350–353 contacts ATP; sequence EISS. Residue Ser-384 participates in L-serine binding.

This sequence belongs to the class-II aminoacyl-tRNA synthetase family. Type-1 seryl-tRNA synthetase subfamily. As to quaternary structure, homodimer. The tRNA molecule binds across the dimer.

The protein resides in the cytoplasm. It carries out the reaction tRNA(Ser) + L-serine + ATP = L-seryl-tRNA(Ser) + AMP + diphosphate + H(+). The catalysed reaction is tRNA(Sec) + L-serine + ATP = L-seryl-tRNA(Sec) + AMP + diphosphate + H(+). It participates in aminoacyl-tRNA biosynthesis; selenocysteinyl-tRNA(Sec) biosynthesis; L-seryl-tRNA(Sec) from L-serine and tRNA(Sec): step 1/1. Functionally, catalyzes the attachment of serine to tRNA(Ser). Is also able to aminoacylate tRNA(Sec) with serine, to form the misacylated tRNA L-seryl-tRNA(Sec), which will be further converted into selenocysteinyl-tRNA(Sec). This Nautilia profundicola (strain ATCC BAA-1463 / DSM 18972 / AmH) protein is Serine--tRNA ligase.